Consider the following 712-residue polypeptide: Auxin response factor 15 (712 aa).

A DNA-binding region (TF-B3) is located at residues 142–244 (FCKTLTASDT…ELRLGVRRAA (103 aa)).

It belongs to the ARF family. In terms of assembly, homo and heterodimers. Expressed in roots, culms, leaves and young panicles.

It localises to the nucleus. Functionally, auxin response factors (ARFs) are transcriptional factors that bind specifically to the DNA sequence 5'-TGTCTC-3' found in the auxin-responsive promoter elements (AuxREs). The polypeptide is Auxin response factor 15 (ARF15) (Oryza sativa subsp. japonica (Rice)).